Here is a 425-residue protein sequence, read N- to C-terminus: Histidine--tRNA ligase (425 aa).

It belongs to the class-II aminoacyl-tRNA synthetase family. Homodimer.

The protein localises to the cytoplasm. The catalysed reaction is tRNA(His) + L-histidine + ATP = L-histidyl-tRNA(His) + AMP + diphosphate + H(+). This chain is Histidine--tRNA ligase, found in Buchnera aphidicola subsp. Baizongia pistaciae (strain Bp).